The primary structure comprises 342 residues: N-acetyl-gamma-glutamyl-phosphate reductase (342 aa).

Cys146 is an active-site residue.

The protein belongs to the NAGSA dehydrogenase family. Type 1 subfamily.

The protein resides in the cytoplasm. It carries out the reaction N-acetyl-L-glutamate 5-semialdehyde + phosphate + NADP(+) = N-acetyl-L-glutamyl 5-phosphate + NADPH + H(+). It participates in amino-acid biosynthesis; L-arginine biosynthesis; N(2)-acetyl-L-ornithine from L-glutamate: step 3/4. Catalyzes the NADPH-dependent reduction of N-acetyl-5-glutamyl phosphate to yield N-acetyl-L-glutamate 5-semialdehyde. The sequence is that of N-acetyl-gamma-glutamyl-phosphate reductase from Frankia casuarinae (strain DSM 45818 / CECT 9043 / HFP020203 / CcI3).